A 110-amino-acid polypeptide reads, in one-letter code: Flagellar hook-basal body complex protein FliE (110 aa).

Belongs to the FliE family.

It localises to the bacterial flagellum basal body. This chain is Flagellar hook-basal body complex protein FliE, found in Pseudomonas putida (strain W619).